We begin with the raw amino-acid sequence, 108 residues long: UPF0102 protein Sputcn32_3693 (108 aa).

It belongs to the UPF0102 family.

The protein is UPF0102 protein Sputcn32_3693 of Shewanella putrefaciens (strain CN-32 / ATCC BAA-453).